Consider the following 93-residue polypeptide: Large ribosomal subunit protein eL37A (93 aa).

Positions 19, 22, 34, and 37 each coordinate Zn(2+). A C4-type zinc finger spans residues 19–37; it reads CRRCGRSSYHIQKSTCAQC.

The protein belongs to the eukaryotic ribosomal protein eL37 family. Zn(2+) serves as cofactor.

Binds to the 23S rRNA. The chain is Large ribosomal subunit protein eL37A from Drosophila melanogaster (Fruit fly).